Here is an 85-residue protein sequence, read N- to C-terminus: MTRFFCCGSYFPGYPSYGTNFHRTFRATPLNCVVPLGSPLGYGCNGYSSLGYGFGGSSFSNLGCGYGGSFYRPWGSGSGFGYSTY.

Positions 37-82 are 12 X 2 AA repeats of G-[YCGS]; the sequence is GSPLGYGCNGYSSLGYGFGGSSFSNLGCGYGGSFYRPWGSGSGFGY.

The protein belongs to the KRTAP type 7 family. Interacts with wool keratins. As to expression, wool.

In terms of biological role, in the wool cortex, wool keratin intermediate filaments are embedded in an interfilamentous matrix, consisting of hair keratin-associated proteins (KRTAP), which are essential for the formation of a rigid and resistant wool shaft through their extensive disulfide bond cross-linking with abundant cysteine residues of wool keratins. The matrix proteins include the high-sulfur and high-glycine-tyrosine keratins. In Ovis aries (Sheep), this protein is Keratin-associated protein 7-1 (KRTAP7-1).